The sequence spans 416 residues: Adenylosuccinate synthetase (416 aa).

GTP is bound by residues 12–18 and 40–42; these read GDEGKGK and GHT. D13 serves as the catalytic Proton acceptor. Mg(2+)-binding residues include D13 and G40. Residues 13-16, 38-41, T125, R139, Q220, T235, and R299 contribute to the IMP site; these read DEGK and NAGH. H41 serves as the catalytic Proton donor. Residue 295 to 301 coordinates substrate; that stretch reads TTTGRPR. Residues R301, 327–329, and 405–407 each bind GTP; these read KLD and STS.

Belongs to the adenylosuccinate synthetase family. In terms of assembly, homodimer. Mg(2+) serves as cofactor.

The protein localises to the cytoplasm. It carries out the reaction IMP + L-aspartate + GTP = N(6)-(1,2-dicarboxyethyl)-AMP + GDP + phosphate + 2 H(+). It functions in the pathway purine metabolism; AMP biosynthesis via de novo pathway; AMP from IMP: step 1/2. Its function is as follows. Plays an important role in the de novo pathway of purine nucleotide biosynthesis. Catalyzes the first committed step in the biosynthesis of AMP from IMP. The polypeptide is Adenylosuccinate synthetase (Nitratiruptor sp. (strain SB155-2)).